Consider the following 593-residue polypeptide: Prospero homeobox protein 2 (593 aa).

Disordered stretches follow at residues 24–48 (CMDQ…QLPS), 79–130 (SPSS…GGTR), 153–199 (TEPR…KDLC), 260–284 (QERS…SAYK), 298–333 (PQAG…QSPL), and 356–388 (GRGP…PWGL). Over residues 87 to 99 (RARESLRCPEKGR) the composition is skewed to basic and acidic residues. The segment covering 167 to 181 (PRSSPRARPRNSCSS) has biased composition (low complexity). Residues 363 to 380 (WSGSPPQDAAFQSHTSPE) show a composition bias toward polar residues. The region spanning 433 to 491 (QEGLSPGHLKKAKLMFFFTRYPSSSLLKAYFPDVQFNRCITSQMIKWFSNFREFYYIQM) is the Prospero-type homeo domain. The interval 433-591 (QEGLSPGHLK…KSPSFLPGLF (159 aa)) is homeo-Prospero. The 100-residue stretch at 492–591 (EKYARQALSD…KSPSFLPGLF (100 aa)) folds into the Prospero domain.

This sequence belongs to the Prospero homeodomain family. In terms of tissue distribution, expressed in testis.

It is found in the nucleus. In terms of biological role, transcription regulator. Does not seem to be essential for embryonic development and postnatal survival. This is Prospero homeobox protein 2 (Prox2) from Mus musculus (Mouse).